The sequence spans 154 residues: 6,7-dimethyl-8-ribityllumazine synthase (154 aa).

5-amino-6-(D-ribitylamino)uracil is bound by residues Phe22, 56-58, and 80-82; these read AFE and AVI. Position 85–86 (85–86) interacts with (2S)-2-hydroxy-3-oxobutyl phosphate; it reads ST. The Proton donor role is filled by His88. Phe113 contributes to the 5-amino-6-(D-ribitylamino)uracil binding site. (2S)-2-hydroxy-3-oxobutyl phosphate is bound at residue Arg127.

The protein belongs to the DMRL synthase family.

It carries out the reaction (2S)-2-hydroxy-3-oxobutyl phosphate + 5-amino-6-(D-ribitylamino)uracil = 6,7-dimethyl-8-(1-D-ribityl)lumazine + phosphate + 2 H2O + H(+). It participates in cofactor biosynthesis; riboflavin biosynthesis; riboflavin from 2-hydroxy-3-oxobutyl phosphate and 5-amino-6-(D-ribitylamino)uracil: step 1/2. Functionally, catalyzes the formation of 6,7-dimethyl-8-ribityllumazine by condensation of 5-amino-6-(D-ribitylamino)uracil with 3,4-dihydroxy-2-butanone 4-phosphate. This is the penultimate step in the biosynthesis of riboflavin. This is 6,7-dimethyl-8-ribityllumazine synthase from Clostridium beijerinckii (strain ATCC 51743 / NCIMB 8052) (Clostridium acetobutylicum).